Reading from the N-terminus, the 240-residue chain is tRNA (guanine-N(7)-)-methyltransferase (240 aa).

The tract at residues 1 to 20 (MTESHDTPITPDGEARPHRR) is disordered. S-adenosyl-L-methionine contacts are provided by E70, E95, D122, and D145. D145 is an active-site residue. Residues K149, D181, and 218–221 (TKFE) each bind substrate.

This sequence belongs to the class I-like SAM-binding methyltransferase superfamily. TrmB family.

The catalysed reaction is guanosine(46) in tRNA + S-adenosyl-L-methionine = N(7)-methylguanosine(46) in tRNA + S-adenosyl-L-homocysteine. It participates in tRNA modification; N(7)-methylguanine-tRNA biosynthesis. In terms of biological role, catalyzes the formation of N(7)-methylguanine at position 46 (m7G46) in tRNA. The chain is tRNA (guanine-N(7)-)-methyltransferase from Pseudomonas putida (strain ATCC 47054 / DSM 6125 / CFBP 8728 / NCIMB 11950 / KT2440).